A 174-amino-acid chain; its full sequence is Shikimate kinase 2 (174 aa).

12–17 provides a ligand contact to ATP; it reads GAGKTT. Mg(2+) contacts are provided by Thr-16 and Asp-32. Residues Asp-34, Arg-58, and Gly-79 each coordinate substrate. Positions 112-126 are LID domain; it reads AEDPEEAQRPSLTGK. Arg-120 contacts ATP. Arg-139 contributes to the substrate binding site. Gln-155 contributes to the ATP binding site.

The protein belongs to the shikimate kinase family. AroL subfamily. As to quaternary structure, monomer. Mg(2+) is required as a cofactor.

It is found in the cytoplasm. It catalyses the reaction shikimate + ATP = 3-phosphoshikimate + ADP + H(+). The protein operates within metabolic intermediate biosynthesis; chorismate biosynthesis; chorismate from D-erythrose 4-phosphate and phosphoenolpyruvate: step 5/7. Its function is as follows. Catalyzes the specific phosphorylation of the 3-hydroxyl group of shikimic acid using ATP as a cosubstrate. This is Shikimate kinase 2 from Yersinia pseudotuberculosis serotype IB (strain PB1/+).